A 592-amino-acid polypeptide reads, in one-letter code: ATP-dependent lipid A-core flippase (592 aa).

The next 6 membrane-spanning stretches (helical) occupy residues 31-51, 76-96, 134-154, 161-181, 261-281, and 288-308; these read LSSF…EGII, AMLV…TYFL, AVIF…ITLV, LALL…VAVI, VTQF…MVQA, and VGGF…LKHL. The ABC transmembrane type-1 domain occupies 35–317; that stretch reads ILAMVAMGVV…LTDVNQPMQR (283 aa). Residues 349-587 form the ABC transporter domain; the sequence is LRFEHVTFRY…DGLYAGLHRI (239 aa). 383–390 is an ATP binding site; that stretch reads GPSGSGKT.

This sequence belongs to the ABC transporter superfamily. Lipid exporter (TC 3.A.1.106) family. As to quaternary structure, homodimer.

It is found in the cell inner membrane. It catalyses the reaction ATP + H2O + lipid A-core oligosaccharideSide 1 = ADP + phosphate + lipid A-core oligosaccharideSide 2.. Functionally, involved in lipopolysaccharide (LPS) biosynthesis. Translocates lipid A-core from the inner to the outer leaflet of the inner membrane. Transmembrane domains (TMD) form a pore in the inner membrane and the ATP-binding domain (NBD) is responsible for energy generation. The chain is ATP-dependent lipid A-core flippase from Ralstonia nicotianae (strain ATCC BAA-1114 / GMI1000) (Ralstonia solanacearum).